The following is a 318-amino-acid chain: Mitochondrial coenzyme A transporter SLC25A42 (318 aa).

Solcar repeat units lie at residues 31-117 (RQVL…YKRI), 129-214 (LPPW…LKSL), and 224-312 (PYPF…MQIL). The next 6 helical transmembrane spans lie at 33-53 (VLSS…AVAP), 89-109 (LWRG…IQFS), 135-155 (LFAG…LDLV), 186-206 (LYHG…LSFF), 230-250 (MIFG…LDVV), and 293-313 (VKGP…QILL).

Belongs to the mitochondrial carrier (TC 2.A.29) family.

The protein localises to the mitochondrion inner membrane. It catalyses the reaction ADP(out) + CoA(in) = ADP(in) + CoA(out). The catalysed reaction is 3'-dephospho-CoA(in) + ADP(out) = 3'-dephospho-CoA(out) + ADP(in). The enzyme catalyses adenosine 3',5'-bisphosphate(in) + ADP(out) = adenosine 3',5'-bisphosphate(out) + ADP(in). It carries out the reaction AMP(in) + ADP(out) = AMP(out) + ADP(in). It catalyses the reaction dADP(in) + ADP(out) = dADP(out) + ADP(in). The catalysed reaction is ADP(in) + ATP(out) = ADP(out) + ATP(in). Functionally, mitochondrial carrier mediating the transport of coenzyme A (CoA) in mitochondria in exchange for intramitochondrial (deoxy)adenine nucleotides and adenosine 3',5'-diphosphate. This Homo sapiens (Human) protein is Mitochondrial coenzyme A transporter SLC25A42 (SLC25A42).